Reading from the N-terminus, the 1507-residue chain is Histone-lysine N-methyltransferase set-2 (1507 aa).

The segment at 1–32 (MSTHDMNHHPPRKSHSKRDKPSSSNSGPKIEN) is disordered. The span at 9–18 (HPPRKSHSKR) shows a compositional bias: basic residues. Residues 128 to 199 (VSLFNMDDNC…QNLLATKCTP (72 aa)) form the RRM domain. Disordered stretches follow at residues 280–578 (DYTM…QPQM), 650–697 (EPFS…EEPA), 803–826 (DEEK…SNHL), 842–1058 (SSRG…GPII), and 1163–1199 (QKPR…FKPR). Residues 296–315 (PIPPPPIKEESPPPPPPPPV) are compositionally biased toward pro residues. The segment covering 316 to 327 (ASVSNLAPVPSV) has biased composition (low complexity). Polar residues predominate over residues 331–342 (YYNNIQPSSSTM). The span at 413 to 444 (VKYETYKMEKRKIKYEGGNKKYEQVHIKERTA) shows a compositional bias: basic and acidic residues. The segment covering 456-465 (SSESASGSSS) has biased composition (low complexity). Positions 478 to 488 (KKKKRPKSPNR) are enriched in basic residues. Positions 566–575 (HLQTPYQHVQ) are enriched in polar residues. Composition is skewed to basic and acidic residues over residues 668-680 (DVGR…KPSL) and 803-823 (DEEK…EKPS). Over residues 846-868 (FYRKQKPIPKSHPKHQEHHHHAK) the composition is skewed to basic residues. The span at 869–908 (ASVSTPVHSSSTSRNSSVAPTPQRTVSTSSSSSSAATSAR) shows a compositional bias: low complexity. Over residues 941 to 951 (SFSSTSIQSSP) the composition is skewed to polar residues. Positions 958 to 971 (SSSSRTSSSSSTSS) are enriched in low complexity. Over residues 973-982 (KQEETADEKS) the composition is skewed to basic and acidic residues. The segment covering 990 to 1007 (SSDESSTTGSTATSVVSS) has biased composition (low complexity). The segment covering 1015-1047 (QQEKTDGEPPKKKSQTDFISERVSKIEGEERPL) has biased composition (basic and acidic residues). Over residues 1179–1190 (EPPPTKRPAPPP) the composition is skewed to pro residues. Residues 1340 to 1345 (RLLQRR) carry the RxxxRR motif motif. The SET domain occupies 1368–1485 (KMIKFARSRI…KGEEITYDYK (118 aa)). Tyrosine 1484 provides a ligand contact to S-adenosyl-L-methionine. One can recognise a Post-SET domain in the interval 1491-1507 (DKIDCLCGAKTCRGYLN).

It belongs to the class V-like SAM-binding methyltransferase superfamily. As to quaternary structure, component of the Set1C/COMPASS complex (also known as the SET2 complex), which contains at least set-2, swd-2.1, cfp-1, rbbp-5, wdr-5.1, dpy-30 and ash-2. As to expression, expressed in all cells of embryo. In L1 larva, it is predominantly expressed in Z2 and Z3 primordial germ cells. In adults, it is predominantly expressed in the germline.

It is found in the nucleus. It catalyses the reaction L-lysyl(4)-[histone H3] + 3 S-adenosyl-L-methionine = N(6),N(6),N(6)-trimethyl-L-lysyl(4)-[histone H3] + 3 S-adenosyl-L-homocysteine + 3 H(+). The enzyme catalyses N(6)-methyl-L-lysyl(4)-[histone H3] + S-adenosyl-L-methionine = N(6),N(6)-dimethyl-L-lysyl(4)-[histone H3] + S-adenosyl-L-homocysteine + H(+). It carries out the reaction N(6),N(6)-dimethyl-L-lysyl(4)-[histone H3] + S-adenosyl-L-methionine = N(6),N(6),N(6)-trimethyl-L-lysyl(4)-[histone H3] + S-adenosyl-L-homocysteine + H(+). In terms of biological role, catalytic component of the COMPASS (Set1C) complex that specifically mono-, di- and trimethylates histone H3 to form H3K4me1/2/3. Binds RNAs which might negatively affect its histone methyltransferase activity. COMPASS recognizes ubiquitinated H2B on one face of the nucleosome which stimulates the methylation of H3 on the opposing face. H3 'Lys-4' methylation represents a specific tag for epigenetic transcriptional activation. Implicated in the epigenetic inheritance of lifespan over several generations. Acts in the germline to limit the longevity of the soma, probably by regulating a lipid metabolism pathway that signals from the germline to the intestine, thereby preventing accumulation of mono-unsaturated fatty acids. Methylation in the germline is required for germline development and fertility, possibly by ensuring genome stability. May act redundantly with mes-3 and mes-4 proteins in the development of a fertile germline. Required for RNAi. Functions as an antagonist of hpl-1 and hpl-2 activity in growth and somatic gonad development. Cooperates with jmjd-3.1 and egl-27 to ensure robust transdifferentiation of the Y rectal cell to the PDA motor neuron during larval development. The polypeptide is Histone-lysine N-methyltransferase set-2 (set-2) (Caenorhabditis elegans).